Consider the following 310-residue polypeptide: Olfactory receptor 5AR1 (310 aa).

Topologically, residues 1-25 (MDKENHSVVTEFVFMGITQDPQLQI) are extracellular. Asn-5 carries an N-linked (GlcNAc...) asparagine glycan. A helical membrane pass occupies residues 26 to 46 (IFFVVFLLVYLVNVIGNVGMI). Residues 47 to 54 (ILIITDSQ) are Cytoplasmic-facing. Residues 55-75 (LHTPMYFFLCNLSFVDLGYSS) form a helical membrane-spanning segment. Topologically, residues 76–99 (AIAPRMLADFLTKHKVISFSSCAT) are extracellular. The cysteines at positions 97 and 189 are disulfide-linked. A helical membrane pass occupies residues 100–120 (QFAFFVGFVDAECYVLAAMAY). The Cytoplasmic segment spans residues 121–133 (DRFVAICRPLHYS). The helical transmembrane segment at 134-154 (TLMSKKVCLVLMLGSYFAGLV) threads the bilayer. Residues 155-196 (SLVAHTSLTFSLSYCGSNIINHFFCEIPPLLALSCSDTYISE) are Extracellular-facing. A helical membrane pass occupies residues 197-217 (ILLFSLCGFIEFSTILIIFIS). Cu cation is bound at residue Cys-203. The Cytoplasmic segment spans residues 218 to 237 (YAFILIAIIRIRSAEGRLKA). Residues 238 to 258 (FSTCGSHLTGVTLFYGTVMFM) form a helical membrane-spanning segment. 2 residues coordinate Cu cation: Met-256 and Arg-261. The Extracellular segment spans residues 259 to 271 (YLRPTSSYSLDQD). Residues 272 to 292 (KWASVFYTIIIPMLNPLIYSL) form a helical membrane-spanning segment. At 293–310 (RNKDVKAAFKKLIGKKPQ) the chain is on the cytoplasmic side.

The protein belongs to the G-protein coupled receptor 1 family.

The protein resides in the cell membrane. Copper binding enhances receptor activity in response to odorant binding. Olfactory receptor that is activated by the binding of organosulfur odorants with thioether groups such as (methylthio)methanethiol (MTMT). The activity of this receptor is mediated by G proteins which activate adenylyl cyclase. This is Olfactory receptor 5AR1 from Mus musculus (Mouse).